A 610-amino-acid chain; its full sequence is UvrABC system protein C (610 aa).

The 79-residue stretch at 16–94 (SQPGVYRMYD…IQRYQPRYNV (79 aa)) folds into the GIY-YIG domain. One can recognise a UVR domain in the interval 204–239 (SQVIEGLIKRMEEASQALRFEEAARIRDQIHAVRQV).

Belongs to the UvrC family. As to quaternary structure, interacts with UvrB in an incision complex.

It localises to the cytoplasm. Its function is as follows. The UvrABC repair system catalyzes the recognition and processing of DNA lesions. UvrC both incises the 5' and 3' sides of the lesion. The N-terminal half is responsible for the 3' incision and the C-terminal half is responsible for the 5' incision. This Proteus mirabilis (strain HI4320) protein is UvrABC system protein C.